Consider the following 199-residue polypeptide: Adenylyl-sulfate kinase (199 aa).

Gly-34–Ser-41 contributes to the ATP binding site. The Phosphoserine intermediate role is filled by Ser-108.

It belongs to the APS kinase family.

It catalyses the reaction adenosine 5'-phosphosulfate + ATP = 3'-phosphoadenylyl sulfate + ADP + H(+). Its pathway is sulfur metabolism; hydrogen sulfide biosynthesis; sulfite from sulfate: step 2/3. Its function is as follows. Catalyzes the synthesis of activated sulfate. This is Adenylyl-sulfate kinase from Oceanobacillus iheyensis (strain DSM 14371 / CIP 107618 / JCM 11309 / KCTC 3954 / HTE831).